Reading from the N-terminus, the 513-residue chain is uncharacterized protein (513 aa).

Residues 254-447 (IPQLPSKLLE…INTIRFHHNL (194 aa)) enclose the HDOD domain.

This is an uncharacterized protein from Treponema pallidum (strain Nichols).